Reading from the N-terminus, the 678-residue chain is ABC transporter G family member 13 (678 aa).

Residues 10 to 254 (VAWEDLTVVI…FGEAGFPCPS (245 aa)) enclose the ABC transporter domain. ATP is bound at residue 48–55 (GPSGSGKS). The 213-residue stretch at 355–567 (KQLRILTQRS…ALQGAYKNEM (213 aa)) folds into the ABC transmembrane type-2 domain. 6 helical membrane passes run 374–394 (YYWM…SIFF), 409–429 (CGGF…QSFI), 446–466 (VAVY…LMCL), 490–510 (LDLI…ASVV), 513–533 (FLMG…SAGF), and 602–622 (LDLA…FAIL). The residue at position 658 (S658) is a Phosphoserine.

This sequence belongs to the ABC transporter superfamily. ABCG family. Eye pigment precursor importer (TC 3.A.1.204) subfamily.

It localises to the membrane. This is ABC transporter G family member 13 (ABCG13) from Arabidopsis thaliana (Mouse-ear cress).